Reading from the N-terminus, the 585-residue chain is Auxin response factor 17 (585 aa).

Positions Phe-119–Pro-221 form a DNA-binding region, TF-B3. 2 disordered regions span residues Glu-483–Leu-517 and Glu-535–Gly-585. Over residues Gly-488–Leu-510 the composition is skewed to low complexity. Polar residues predominate over residues Lys-573 to Gly-585.

It belongs to the ARF family. Homo and heterodimers.

The protein resides in the nucleus. Auxin response factors (ARFs) are transcriptional factors that bind specifically to the DNA sequence 5'-TGTCTC-3' found in the auxin-responsive promoter elements (AuxREs). Could act as transcriptional activator or repressor. Formation of heterodimers with Aux/IAA proteins may alter their ability to modulate early auxin response genes expression. In Arabidopsis thaliana (Mouse-ear cress), this protein is Auxin response factor 17 (ARF17).